Here is a 142-residue protein sequence, read N- to C-terminus: Coactosin-like protein (142 aa).

Alanine 2 carries the post-translational modification N-acetylalanine. Residues 2–130 (ATKIDKEACR…EEDFIKSELK (129 aa)) form the ADF-H domain. Residues 66–75 (TGDAMSKRSK) form a flexible and important for F-actin binding region. An N6-acetyllysine mark is found at lysine 102 and lysine 126.

This sequence belongs to the actin-binding proteins ADF family. Coactosin subfamily. In terms of assembly, interacts with 5-lipoxygenase (ALOX5/5LO) in a calcium-independent manner. Binds to F-actin with a stoichiometry of 1:2. Widely expressed with highest levels in placenta, lung, kidney and peripheral blood leukocytes and lower levels in brain, liver and pancreas.

It is found in the cytoplasm. The protein resides in the cytoskeleton. It localises to the nucleus. In terms of biological role, binds to F-actin in a calcium-independent manner. Has no direct effect on actin depolymerization. Acts as a chaperone for ALOX5 (5LO), influencing both its stability and activity in leukotrienes synthesis. This is Coactosin-like protein (COTL1) from Homo sapiens (Human).